Consider the following 392-residue polypeptide: ESX-1 secretion-associated protein EspA (392 aa).

The tract at residues 302 to 392 (TRQALRPRAD…GQKVLVRNVV (91 aa)) is disordered. The span at 334–344 (QGMGGPVGMGG) shows a compositional bias: gly residues.

In terms of assembly, homodimer; disulfide-linked.

It localises to the secreted. Its function is as follows. Required for secretion of EsxA (ESAT-6) and EsxB (CFP-10) and for virulence. The protein is ESX-1 secretion-associated protein EspA of Mycobacterium tuberculosis (strain CDC 1551 / Oshkosh).